Here is a 158-residue protein sequence, read N- to C-terminus: 6,7-dimethyl-8-ribityllumazine synthase (158 aa).

Residues F22, 57–59 (AVE), and 81–83 (AVI) each bind 5-amino-6-(D-ribitylamino)uracil. Position 86-87 (86-87 (GT)) interacts with (2S)-2-hydroxy-3-oxobutyl phosphate. H89 serves as the catalytic Proton donor. 5-amino-6-(D-ribitylamino)uracil is bound at residue F114. R128 serves as a coordination point for (2S)-2-hydroxy-3-oxobutyl phosphate.

The protein belongs to the DMRL synthase family. As to quaternary structure, forms an icosahedral capsid composed of 60 subunits, arranged as a dodecamer of pentamers.

The catalysed reaction is (2S)-2-hydroxy-3-oxobutyl phosphate + 5-amino-6-(D-ribitylamino)uracil = 6,7-dimethyl-8-(1-D-ribityl)lumazine + phosphate + 2 H2O + H(+). The protein operates within cofactor biosynthesis; riboflavin biosynthesis; riboflavin from 2-hydroxy-3-oxobutyl phosphate and 5-amino-6-(D-ribitylamino)uracil: step 1/2. Catalyzes the formation of 6,7-dimethyl-8-ribityllumazine by condensation of 5-amino-6-(D-ribitylamino)uracil with 3,4-dihydroxy-2-butanone 4-phosphate. This is the penultimate step in the biosynthesis of riboflavin. The polypeptide is 6,7-dimethyl-8-ribityllumazine synthase (Shewanella putrefaciens (strain CN-32 / ATCC BAA-453)).